The following is a 299-amino-acid chain: Hemolysin C homolog (299 aa).

CBS domains are found at residues 80–142 (MVPR…NGRL) and 145–202 (LIRK…IDDE).

The protein belongs to the UPF0053 family. Hemolysin C subfamily.

The polypeptide is Hemolysin C homolog (tlyC) (Rickettsia conorii (strain ATCC VR-613 / Malish 7)).